A 418-amino-acid chain; its full sequence is Gamma-glutamyl phosphate reductase (418 aa).

Belongs to the gamma-glutamyl phosphate reductase family.

The protein resides in the cytoplasm. It carries out the reaction L-glutamate 5-semialdehyde + phosphate + NADP(+) = L-glutamyl 5-phosphate + NADPH + H(+). Its pathway is amino-acid biosynthesis; L-proline biosynthesis; L-glutamate 5-semialdehyde from L-glutamate: step 2/2. In terms of biological role, catalyzes the NADPH-dependent reduction of L-glutamate 5-phosphate into L-glutamate 5-semialdehyde and phosphate. The product spontaneously undergoes cyclization to form 1-pyrroline-5-carboxylate. The polypeptide is Gamma-glutamyl phosphate reductase (Chlorobium limicola (strain DSM 245 / NBRC 103803 / 6330)).